Here is an 894-residue protein sequence, read N- to C-terminus: Interleukin enhancer-binding factor 3 (894 aa).

The DZF domain occupies 5–378 (RIFVNDDRHV…PMKRPMEEDG (374 aa)). The tract at residues 50-86 (DEQEKGSSEQAESDNMDVPPEDDSKEGAGEQKTEHMT) is disordered. Positions 60–73 (AESDNMDVPPEDDS) are enriched in acidic residues. At Ser-62 the chain carries Phosphoserine. The span at 74-86 (KEGAGEQKTEHMT) shows a compositional bias: basic and acidic residues. Lys-100 bears the N6-acetyllysine mark. The residue at position 188 (Thr-188) is a Phosphothreonine; by PKR. Ser-190 carries the phosphoserine modification. Residue Lys-297 forms a Glycyl lysine isopeptide (Lys-Gly) (interchain with G-Cter in ubiquitin) linkage. Thr-315 carries the phosphothreonine; by PKR modification. Lys-348 is covalently cross-linked (Glycyl lysine isopeptide (Lys-Gly) (interchain with G-Cter in SUMO1)). The interval 363-401 (TTYAITPMKRPMEEDGEEKSPSKKKKKIQKKEEKAEPPQ) is disordered. The Bipartite nuclear localization signal signature appears at 371 to 389 (KRPMEEDGEEKSPSKKKKK). The segment covering 372–383 (RPMEEDGEEKSP) has biased composition (basic and acidic residues). Phosphoserine is present on residues Ser-382 and Ser-384. Lys-396 is covalently cross-linked (Glycyl lysine isopeptide (Lys-Gly) (interchain with G-Cter in SUMO2)). In terms of domain architecture, DRBM 1 spans 398-467 (EPPQAMNALM…AVKVLQDMGL (70 aa)). N6-acetyllysine is present on Lys-460. The disordered stretch occupies residues 466 to 524 (GLPTGAEGRDSSKGEDSAEETEAKPAVVAPAPVVEAVSTPSAAFPSDATAEQGPILTKH). Residues 472 to 481 (EGRDSSKGED) show a composition bias toward basic and acidic residues. Residues Ser-476, Ser-477, and Ser-482 each carry the phosphoserine modification. A Glycyl lysine isopeptide (Lys-Gly) (interchain with G-Cter in SUMO2) cross-link involves residue Lys-489. Residues 489–508 (KPAVVAPAPVVEAVSTPSAA) are compositionally biased toward low complexity. A DRBM 2 domain is found at 524–590 (HGKNPVMELN…ALAALEKLFP (67 aa)). Phosphothreonine is present on Thr-592. The segment at 609–894 (RGGPKFAAKP…ADHSMNYQYR (286 aa)) is interaction with PRMT1. Disordered stretches follow at residues 625 to 660 (MGGP…FGGA) and 718 to 894 (QGDN…YQYR). Over residues 644–660 (RGGSIRGRGRGRGFGGA) the composition is skewed to gly residues. 2 stretches are compositionally biased toward low complexity: residues 743–770 (PSYG…YGPP) and 777–792 (YNHG…SYNS). Phosphoserine occurs at positions 792, 810, 812, and 816. Gly residues-rich tracts occupy residues 811-825 (GSGG…GSGG) and 832-851 (SHGG…GKQG). The span at 857-866 (NYNSPGSGQN) shows a compositional bias: polar residues. The span at 867–878 (YSGPPSSYQSSQ) shows a compositional bias: low complexity.

As to quaternary structure, identified in a IGF2BP1-dependent mRNP granule complex containing untranslated mRNAs. Interacts with FUS and SMN. Interacts (via C-terminus) with PRMT1. Forms a complex with ILF2. Can also bind to PRKDC/XRCC7: this may stabilize the interaction of PRKDC/XRCC7 and the heterodimeric complex of XRCC6/KU70 and XRCC5/KU80. Forms a heteromeric complex with ZNF346 and ILF3. Found in a nuclear export complex with XPO5, ILF3, Ran and double-stranded RNA or double-stranded minihelix VA1 RNA. Found in a nuclear export complex with XPO5, RAN, ILF3, ZNF346 and double-stranded RNA. Interacts with XPO5 and ZNF346. Forms a complex with ILF2, YLPM1, KHDRBS1, RBMX, NCOA5 and PPP1CA. Interacts with AGO1 and AGO2. Interacts with DHX36; this interaction occurs in a RNA-dependent manner. Interacts with ELAVL1; this interaction occurs in a RNA-dependent manner. Interacts with HAVCR2; this interaction promotes ILF3 ubiquitination and subsequent degradation. Phosphorylated at Thr-188 and Thr-315 by PKR in response to certain RNA viruses. This phosphorylation results in the dissociation of ILF2 from the ILF2-ILF3 complex resulting in a cytoplasmic sequestration of ILF3 where it can bind to viral RNAs and impede viral replication. In terms of processing, methylated by protein arginine N-methyltransferase 1. Post-translationally, ubiquitinated at Lys-297 in a TRIM47-dependent manner; this 'Lys-48'-linked ubiquitination promotes ILF3 degradation. Ubiquitous.

The protein resides in the nucleus. Its subcellular location is the nucleolus. The protein localises to the cytoplasm. Functionally, RNA-binding protein that plays an essential role in the biogenesis of circular RNAs (circRNAs) which are produced by back-splicing circularization of pre-mRNAs. Within the nucleus, promotes circRNAs processing by stabilizing the regulatory elements residing in the flanking introns of the circularized exons. Plays thereby a role in the back-splicing of a subset of circRNAs. As a consequence, participates in a wide range of transcriptional and post-transcriptional processes. Binds to poly-U elements and AU-rich elements (AREs) in the 3'-UTR of target mRNAs. Upon viral infection, ILF3 accumulates in the cytoplasm and participates in the innate antiviral response. Mechanistically, ILF3 becomes phosphorylated and activated by the double-stranded RNA-activated protein kinase/PKR which releases ILF3 from cellular mature circRNAs. In turn, unbound ILF3 molecules are able to interact with and thus inhibit viral mRNAs. (Microbial infection) Plays a positive role in HIV-1 virus production by binding to and thereby stabilizing HIV-1 RNA, together with ILF3. The chain is Interleukin enhancer-binding factor 3 (ILF3) from Homo sapiens (Human).